Consider the following 345-residue polypeptide: Carbamoyl phosphate synthase small chain (345 aa).

The interval 1–169 (MKKYLVMEDG…FVKGEEGGTV (169 aa)) is CPSase. The L-glutamine site is built by Ser45, Gly213, and Gly215. Residues 168–345 (TVLFIDLGSK…GEMKRRIGYA (178 aa)) form the Glutamine amidotransferase type-1 domain. Cys242 acts as the Nucleophile in catalysis. Residues Phe243, Gln246, Asn282, Gly284, and Tyr285 each coordinate L-glutamine. Residues His321 and Glu323 contribute to the active site.

This sequence belongs to the CarA family. In terms of assembly, composed of two chains; the small (or glutamine) chain promotes the hydrolysis of glutamine to ammonia, which is used by the large (or ammonia) chain to synthesize carbamoyl phosphate. Tetramer of heterodimers (alpha,beta)4.

It catalyses the reaction hydrogencarbonate + L-glutamine + 2 ATP + H2O = carbamoyl phosphate + L-glutamate + 2 ADP + phosphate + 2 H(+). The enzyme catalyses L-glutamine + H2O = L-glutamate + NH4(+). It functions in the pathway amino-acid biosynthesis; L-arginine biosynthesis; carbamoyl phosphate from bicarbonate: step 1/1. Its pathway is pyrimidine metabolism; UMP biosynthesis via de novo pathway; (S)-dihydroorotate from bicarbonate: step 1/3. In terms of biological role, small subunit of the glutamine-dependent carbamoyl phosphate synthetase (CPSase). CPSase catalyzes the formation of carbamoyl phosphate from the ammonia moiety of glutamine, carbonate, and phosphate donated by ATP, constituting the first step of 2 biosynthetic pathways, one leading to arginine and/or urea and the other to pyrimidine nucleotides. The small subunit (glutamine amidotransferase) binds and cleaves glutamine to supply the large subunit with the substrate ammonia. The chain is Carbamoyl phosphate synthase small chain from Thermoplasma volcanium (strain ATCC 51530 / DSM 4299 / JCM 9571 / NBRC 15438 / GSS1).